The chain runs to 265 residues: Isoprenyl transferase (265 aa).

Residue aspartate 35 is part of the active site. Mg(2+) is bound at residue aspartate 35. Substrate is bound by residues 36-39, tryptophan 40, arginine 48, histidine 52, and 80-82; these read GNGR and SIE. Asparagine 83 (proton acceptor) is an active-site residue. Substrate-binding positions include tryptophan 84, arginine 86, arginine 203, and 209-211; that span reads RIS. Mg(2+) is bound at residue glutamate 222.

Belongs to the UPP synthase family. Homodimer. Mg(2+) is required as a cofactor.

Catalyzes the condensation of isopentenyl diphosphate (IPP) with allylic pyrophosphates generating different type of terpenoids. The polypeptide is Isoprenyl transferase (Chlorobaculum tepidum (strain ATCC 49652 / DSM 12025 / NBRC 103806 / TLS) (Chlorobium tepidum)).